The sequence spans 89 residues: Small ribosomal subunit protein uS15 (89 aa).

The protein belongs to the universal ribosomal protein uS15 family. As to quaternary structure, part of the 30S ribosomal subunit. Forms a bridge to the 50S subunit in the 70S ribosome, contacting the 23S rRNA.

In terms of biological role, one of the primary rRNA binding proteins, it binds directly to 16S rRNA where it helps nucleate assembly of the platform of the 30S subunit by binding and bridging several RNA helices of the 16S rRNA. Functionally, forms an intersubunit bridge (bridge B4) with the 23S rRNA of the 50S subunit in the ribosome. The sequence is that of Small ribosomal subunit protein uS15 from Kineococcus radiotolerans (strain ATCC BAA-149 / DSM 14245 / SRS30216).